We begin with the raw amino-acid sequence, 445 residues long: 3-phosphoshikimate 1-carboxyvinyltransferase (445 aa).

3-phosphoshikimate-binding residues include K21, S22, and R26. K21 is a binding site for phosphoenolpyruvate. The phosphoenolpyruvate site is built by G92 and R120. 4 residues coordinate 3-phosphoshikimate: S165, Q166, D307, and K334. Q166 lines the phosphoenolpyruvate pocket. Catalysis depends on D307, which acts as the Proton acceptor. 3 residues coordinate phosphoenolpyruvate: R338, R379, and K405.

The protein belongs to the EPSP synthase family. Monomer.

It is found in the cytoplasm. The enzyme catalyses 3-phosphoshikimate + phosphoenolpyruvate = 5-O-(1-carboxyvinyl)-3-phosphoshikimate + phosphate. Its pathway is metabolic intermediate biosynthesis; chorismate biosynthesis; chorismate from D-erythrose 4-phosphate and phosphoenolpyruvate: step 6/7. In terms of biological role, catalyzes the transfer of the enolpyruvyl moiety of phosphoenolpyruvate (PEP) to the 5-hydroxyl of shikimate-3-phosphate (S3P) to produce enolpyruvyl shikimate-3-phosphate and inorganic phosphate. The protein is 3-phosphoshikimate 1-carboxyvinyltransferase of Chlamydia abortus (strain DSM 27085 / S26/3) (Chlamydophila abortus).